We begin with the raw amino-acid sequence, 494 residues long: 4-trimethylaminobutyraldehyde dehydrogenase (494 aa).

Ser-2 bears the N-acetylserine; in 4-trimethylaminobutyraldehyde dehydrogenase, N-terminally processed mark. Position 30 is an N6-acetyllysine; alternate (Lys-30). Lys-30 is subject to N6-succinyllysine; alternate. Lys-59 carries the post-translational modification N6-succinyllysine. NAD(+) is bound by residues Lys-180 and 232 to 236 (GSVPT). Glu-254 serves as the catalytic Proton acceptor. The active-site Nucleophile is the Cys-288. Lys-298 carries the post-translational modification N6-acetyllysine. An N6-acetyllysine; alternate modification is found at Lys-303. Lys-303 is modified (N6-succinyllysine; alternate). Position 344 is an N6-acetyllysine (Lys-344). NAD(+) is bound at residue Glu-391.

It belongs to the aldehyde dehydrogenase family. As to quaternary structure, homotetramer. In terms of tissue distribution, detected in brain (at protein level). High expression in adult liver, skeletal muscle, and kidney. Low levels in heart, pancreas, lung and brain. Expressed in all regions of the brain. Expression levels are variable in the different brain areas, with the highest levels in the spinal cord and the lowest in the occipital pole.

It localises to the cytoplasm. Its subcellular location is the cytosol. It catalyses the reaction 4-(trimethylamino)butanal + NAD(+) + H2O = 4-(trimethylamino)butanoate + NADH + 2 H(+). The catalysed reaction is an aldehyde + NAD(+) + H2O = a carboxylate + NADH + 2 H(+). The enzyme catalyses 4-aminobutanal + NAD(+) + H2O = 4-aminobutanoate + NADH + 2 H(+). It carries out the reaction formaldehyde + NAD(+) + H2O = formate + NADH + 2 H(+). It catalyses the reaction acetaldehyde + NAD(+) + H2O = acetate + NADH + 2 H(+). The catalysed reaction is imidazole-4-acetaldehyde + NAD(+) + H2O = imidazole-4-acetate + NADH + 2 H(+). The enzyme catalyses acrolein + NAD(+) + H2O = acrylate + NADH + 2 H(+). It carries out the reaction (5-hydroxyindol-3-yl)acetaldehyde + NAD(+) + H2O = (5-hydroxyindol-3-yl)acetate + NADH + 2 H(+). It catalyses the reaction 3,4-dihydroxyphenylacetaldehyde + NAD(+) + H2O = 3,4-dihydroxyphenylacetate + NADH + 2 H(+). The catalysed reaction is spermine monoaldehyde + NAD(+) + H2O = N-(2-carboxyethyl)spermidine + NADH + 2 H(+). The enzyme catalyses propanal + NAD(+) + H2O = propanoate + NADH + 2 H(+). It carries out the reaction butanal + NAD(+) + H2O = butanoate + NADH + 2 H(+). It catalyses the reaction pentanal + NAD(+) + H2O = pentanoate + NADH + 2 H(+). The catalysed reaction is hexanal + NAD(+) + H2O = hexanoate + NADH + 2 H(+). Its pathway is amine and polyamine biosynthesis; carnitine biosynthesis. In terms of biological role, converts gamma-trimethylaminobutyraldehyde into gamma-butyrobetaine with high efficiency (in vitro). Can catalyze the irreversible oxidation of a broad range of aldehydes to the corresponding acids in an NAD-dependent reaction, but with low efficiency. Catalyzes the oxidation of aldehydes arising from biogenic amines and polyamines. In Homo sapiens (Human), this protein is 4-trimethylaminobutyraldehyde dehydrogenase (ALDH9A1).